Reading from the N-terminus, the 776-residue chain is Protein SEY1 (776 aa).

Topologically, residues 1–681 (MADRPAIQLI…KRSIITTRTH (681 aa)) are cytoplasmic. In terms of domain architecture, GB1/RHD3-type G spans 34–263 (GLDYHVISVF…TENYYFKPQY (230 aa)). 44–51 (GSQSSGKS) contacts GTP. The helical transmembrane segment at 682 to 702 (IPPWIYVLLAVLGWNEFVAVI) threads the bilayer. The Lumenal portion of the chain corresponds to 703 to 705 (RNP). The chain crosses the membrane as a helical span at residues 706–726 (LFVTLTLILGATFFVIHKFGL). Over 727-776 (WGPVVNVVQSAVGETRTAIKDKLRQFVVEDHEVKESFEMKDFSKNEQKEK) the chain is Cytoplasmic.

It belongs to the TRAFAC class dynamin-like GTPase superfamily. GB1/RHD3 GTPase family. RHD3 subfamily. In terms of assembly, interacts with RTN1 and YOP1; GTP binding is not required for these interactions.

The protein resides in the endoplasmic reticulum membrane. Its function is as follows. Cooperates with the reticulon proteins RTN1 and RTN2 and the tubule-shaping DP1 family protein YOP1 to generate and maintain the structure of the tubular endoplasmic reticulum network. Has GTPase activity, which is required for its function in ER organization. In Saccharomyces cerevisiae (strain ATCC 204508 / S288c) (Baker's yeast), this protein is Protein SEY1.